Consider the following 250-residue polypeptide: uncharacterized protein (250 aa).

Residues 165–208 adopt a coiled-coil conformation; sequence HLNLETANTKATEYQKNYQEELKQRQELRQKLLQERTQKMLEAL. The segment covering 201-233 has biased composition (basic and acidic residues); that stretch reads TQKMLEALHQEETPEQDARDTAKKKTDQEEHTM. Residues 201–250 are disordered; that stretch reads TQKMLEALHQEETPEQDARDTAKKKTDQEEHTMRKANAPKTKASGEAPTP.

This is an uncharacterized protein from Treponema pallidum (strain Nichols).